The primary structure comprises 424 residues: GTPase Obg (424 aa).

Residues Met-1–Leu-158 form the Obg domain. Residues Ala-159–Ser-331 form the OBG-type G domain. Residues Gly-165–Ser-172, Phe-190–Lys-194, Asp-212–Gly-215, Asn-282–Asp-285, and Ser-312–Ala-314 contribute to the GTP site. Mg(2+) contacts are provided by Ser-172 and Thr-192. Residues Arg-345–Leu-424 form the OCT domain.

The protein belongs to the TRAFAC class OBG-HflX-like GTPase superfamily. OBG GTPase family. Monomer. Mg(2+) is required as a cofactor.

It localises to the cytoplasm. An essential GTPase which binds GTP, GDP and possibly (p)ppGpp with moderate affinity, with high nucleotide exchange rates and a fairly low GTP hydrolysis rate. Plays a role in control of the cell cycle, stress response, ribosome biogenesis and in those bacteria that undergo differentiation, in morphogenesis control. In Clostridium botulinum (strain Langeland / NCTC 10281 / Type F), this protein is GTPase Obg.